Reading from the N-terminus, the 520-residue chain is GMP synthase [glutamine-hydrolyzing] (520 aa).

Residues 9 to 202 (RVLIVDFGSQ…LFNIAGLKGD (194 aa)) enclose the Glutamine amidotransferase type-1 domain. Cysteine 86 acts as the Nucleophile in catalysis. Catalysis depends on residues histidine 176 and glutamate 178. A GMPS ATP-PPase domain is found at 203–395 (WTMAAFRQEM…LGLAPAFVGR (193 aa)). 230–236 (SGGVDSS) contacts ATP.

In terms of assembly, homodimer.

The catalysed reaction is XMP + L-glutamine + ATP + H2O = GMP + L-glutamate + AMP + diphosphate + 2 H(+). The protein operates within purine metabolism; GMP biosynthesis; GMP from XMP (L-Gln route): step 1/1. Catalyzes the synthesis of GMP from XMP. This Caulobacter vibrioides (strain ATCC 19089 / CIP 103742 / CB 15) (Caulobacter crescentus) protein is GMP synthase [glutamine-hydrolyzing].